The following is a 323-amino-acid chain: MIGTNVAPRHENWLQVVKSYYQLTKPRIIPLLLITTAAAMWIASEGRVDLFTLFITLIGGTLAAAAAQVMNCIYDRDIDYEMLRTRARPIPSGRVQSRHAFIFAVILAILSFSLFALFVNLLSGLLAMSGIVFYMLVYTHLLKRNSPQNIVIGGAAGSIPPLVGWAAVTGDLGWAPWILFAIIFLWTPPHFWALALMIKDDYAQVNVPMMPVVEGEESTVRQIWWYTLLMIPCTFLLVYPLGVSGAVYGGIAIILGAMFIQKAWQLKQAPFDQVLARSLFKFSIFYLMLLCTAMVIDSLPLTHQVMVALGDNLNLLLSLIPLN.

The next 8 membrane-spanning stretches (helical) occupy residues 28-48 (IIPL…EGRV), 50-70 (LFTL…AQVM), 101-121 (FIFA…FVNL), 122-142 (LSGL…THLL), 150-170 (IVIG…AVTG), 178-198 (ILFA…ALMI), 235-255 (FLLV…AIIL), and 282-302 (FSIF…LPLT).

It belongs to the UbiA prenyltransferase family. Protoheme IX farnesyltransferase subfamily.

The protein resides in the cell inner membrane. The enzyme catalyses heme b + (2E,6E)-farnesyl diphosphate + H2O = Fe(II)-heme o + diphosphate. Its pathway is porphyrin-containing compound metabolism; heme O biosynthesis; heme O from protoheme: step 1/1. Converts heme B (protoheme IX) to heme O by substitution of the vinyl group on carbon 2 of heme B porphyrin ring with a hydroxyethyl farnesyl side group. The sequence is that of Protoheme IX farnesyltransferase from Rippkaea orientalis (strain PCC 8801 / RF-1) (Cyanothece sp. (strain PCC 8801)).